A 291-amino-acid polypeptide reads, in one-letter code: Probable 2-(5''-triphosphoribosyl)-3'-dephosphocoenzyme-A synthase (291 aa).

This sequence belongs to the CitG/MdcB family.

It catalyses the reaction 3'-dephospho-CoA + ATP = 2'-(5''-triphospho-alpha-D-ribosyl)-3'-dephospho-CoA + adenine. Involved in the formation of 2-(5''-phosphoribosyl)-3'-dephosphocoenzyme-A, the prosthetic group of the acyl-carrier protein of the malonate decarboxylase. The protein is Probable 2-(5''-triphosphoribosyl)-3'-dephosphocoenzyme-A synthase of Pseudomonas fluorescens (strain ATCC BAA-477 / NRRL B-23932 / Pf-5).